The sequence spans 394 residues: Elongation factor Tu (394 aa).

A tr-type G domain is found at 10–204 (KEHANIGTIG…AVDDYIPTPE (195 aa)). The G1 stretch occupies residues 19 to 26 (GHVDHGKT). 19-26 (GHVDHGKT) is a GTP binding site. Thr26 serves as a coordination point for Mg(2+). Positions 60–64 (GITIN) are G2. The G3 stretch occupies residues 81–84 (DCPG). GTP is bound by residues 81 to 85 (DCPGH) and 136 to 139 (NKVD). The interval 136-139 (NKVD) is G4. The tract at residues 174–176 (SAL) is G5.

The protein belongs to the TRAFAC class translation factor GTPase superfamily. Classic translation factor GTPase family. EF-Tu/EF-1A subfamily. Monomer.

It localises to the cytoplasm. The catalysed reaction is GTP + H2O = GDP + phosphate + H(+). GTP hydrolase that promotes the GTP-dependent binding of aminoacyl-tRNA to the A-site of ribosomes during protein biosynthesis. In Staphylococcus epidermidis (strain ATCC 35984 / DSM 28319 / BCRC 17069 / CCUG 31568 / BM 3577 / RP62A), this protein is Elongation factor Tu.